A 172-amino-acid polypeptide reads, in one-letter code: MKTMFILALIALAATSVVAQLDTTCSQGYGQCQQQPQQQVNTCSALLQQCSPTPYVQSQMWQASGCQLMRQQCCQPLAQISEQARCQAVCSVAQVIMRQQQGQSFGQPQQQVQSFSQPQHQVPIEITRMVLQTLPSMCNVNIPQYCTTTPCRTITQTPYNIPMSATCVGGTC.

Positions 1–19 are cleaved as a signal peptide; that stretch reads MKTMFILALIALAATSVVA.

Belongs to the prolamin family. In terms of processing, contains 7 disulfide bonds.

In terms of biological role, seed storage protein. Not integrated in the gluten polymer through disulfide bonds, unless incorporated by reduction and reoxidation during dough making. Increases dough strength and bread volume, but decreases dough stability when added into a base wheat flour. This chain is Avenin-like a4, found in Triticum aestivum (Wheat).